A 114-amino-acid chain; its full sequence is Beta-microseminoprotein (114 aa).

An N-terminal signal peptide occupies residues 1 to 20 (MNVLLGGFVIFATFVTLCNA). 5 cysteine pairs are disulfide-bonded: Cys22–Cys70, Cys38–Cys62, Cys57–Cys93, Cys60–Cys69, and Cys84–Cys107.

It belongs to the beta-microseminoprotein family. In terms of assembly, homodimer; Interacts with PI16.

Its subcellular location is the secreted. The chain is Beta-microseminoprotein (MSMB) from Papio anubis (Olive baboon).